A 102-amino-acid chain; its full sequence is Small ribosomal subunit protein uS10 (102 aa).

This sequence belongs to the universal ribosomal protein uS10 family. As to quaternary structure, part of the 30S ribosomal subunit.

Its function is as follows. Involved in the binding of tRNA to the ribosomes. This Opitutus terrae (strain DSM 11246 / JCM 15787 / PB90-1) protein is Small ribosomal subunit protein uS10.